The chain runs to 420 residues: Transcription factor TCP4 (420 aa).

Positions 1-27 (MSDDQFHHPPPPSSMRHRSTSDAADGG) are disordered. The 59-residue stretch at 45–103 (RKDRHSKVCTAKGPRDRRVRLSAHTAIQFYDVQDRLGFDRPSKAVDWLIKKAKTSIDEL) folds into the TCP domain. Disordered regions lie at residues 121–176 (NAKP…PSMD), 228–256 (LSLQSFPDGPPSLLHHQHHHHTSASASEP), 353–379 (HQSISTDDLNHHHHLPPPVHQSAIPGI), and 399–420 (QEEEQHDGLTHKPSSASSISRH). Residues 410 to 420 (KPSSASSISRH) are compositionally biased toward polar residues.

As to quaternary structure, interacts with AHL27 and AHL29. Interacts with SPL. Interacts with JGB. Interacts with GI (via N-terminus). In terms of tissue distribution, expressed in cotyledons, particularly in the vascular region, in leaves, roots, buds, flowers and immature siliques.

The protein resides in the nucleus. Functionally, transcription factor playing a pivotal role in the control of morphogenesis of shoot organs by negatively regulating the expression of boundary-specific genes such as CUC genes, probably through the induction of miRNA (e.g. miR164). Required during early steps of embryogenesis. Participates in ovule development. Activates LOX2 expression by binding to the 5'-GGACCA-3' motif found in its promoter. Activates YUC5 transcription by binding to the 5'-GTGGGCCA-3' motif found in its promoter. Through the activation of YUC5 transcription, integrates the auxin response to a brassinosteroid-dependent molecular circuit that promotes cell elongation in hypocotyls. Activates GIS transcription by binding to the 5'-TGGTCC-3' motif found in its promoter. Involved in the regulation of trichome branching through the activation of GIS transcription. Activates CO transcription by binding to the 5'-GGACCAC-3' motif found in its promoter. Involved in the regulation of photoperiodic flowering through the activation of CO transcription. Activates TCL1 and TCL2 transcription by binding to the 5'-TGGCCA-3' and 5'-GTGGACCA-3' motifS found in their respective promoters. Involved in the suppression of trichome initiaition through the activation of TCL1 and TCL2 transcription. Activates HAT2 transcription by binding to the 5'-TGGTCCAC-3' motif found in its promoter. Through the activation of HAT2 transcription, involved in the auxin-independent reprogramming of mitotic cells to exit division and acquire differentiation competence within the transition zone. In Arabidopsis thaliana (Mouse-ear cress), this protein is Transcription factor TCP4 (TCP4).